A 93-amino-acid chain; its full sequence is Mitochondrial import inner membrane translocase subunit Tim10-A (93 aa).

Residues 32–57 (CHKKCVPPHYKEAELSKGESVCLDRC) carry the Twin CX3C motif motif. Cystine bridges form between C32/C57 and C36/C53.

It belongs to the small Tim family. As to quaternary structure, heterohexamer; composed of 3 copies of TIMM9 and 3 copies of TIMM10/TIM10A, named soluble 70 kDa complex. The complex forms a 6-bladed alpha-propeller structure and associates with the TIMM22 component of the TIM22 complex. Interacts with multi-pass transmembrane proteins in transit.

The protein resides in the mitochondrion inner membrane. Functionally, mitochondrial intermembrane chaperone that participates in the import and insertion of multi-pass transmembrane proteins into the mitochondrial inner membrane. May also be required for the transfer of beta-barrel precursors from the TOM complex to the sorting and assembly machinery (SAM complex) of the outer membrane. Acts as a chaperone-like protein that protects the hydrophobic precursors from aggregation and guide them through the mitochondrial intermembrane space. The protein is Mitochondrial import inner membrane translocase subunit Tim10-A (timm10-a) of Xenopus laevis (African clawed frog).